The sequence spans 219 residues: Imidazole glycerol phosphate synthase subunit HisH (219 aa).

Positions 2–218 (KVVVIDSGTG…MVWTPEGTSG (217 aa)) constitute a Glutamine amidotransferase type-1 domain. Cysteine 87 serves as the catalytic Nucleophile. Catalysis depends on residues histidine 193 and glutamate 195.

As to quaternary structure, heterodimer of HisH and HisF.

It is found in the cytoplasm. The catalysed reaction is 5-[(5-phospho-1-deoxy-D-ribulos-1-ylimino)methylamino]-1-(5-phospho-beta-D-ribosyl)imidazole-4-carboxamide + L-glutamine = D-erythro-1-(imidazol-4-yl)glycerol 3-phosphate + 5-amino-1-(5-phospho-beta-D-ribosyl)imidazole-4-carboxamide + L-glutamate + H(+). It catalyses the reaction L-glutamine + H2O = L-glutamate + NH4(+). The protein operates within amino-acid biosynthesis; L-histidine biosynthesis; L-histidine from 5-phospho-alpha-D-ribose 1-diphosphate: step 5/9. Its function is as follows. IGPS catalyzes the conversion of PRFAR and glutamine to IGP, AICAR and glutamate. The HisH subunit catalyzes the hydrolysis of glutamine to glutamate and ammonia as part of the synthesis of IGP and AICAR. The resulting ammonia molecule is channeled to the active site of HisF. The sequence is that of Imidazole glycerol phosphate synthase subunit HisH from Granulibacter bethesdensis (strain ATCC BAA-1260 / CGDNIH1).